The primary structure comprises 188 residues: MILPINIYSDDILRLKAKPLKGVDSAIEELIASMFESMRNASGIGLAAPQVGRSIRLLVLDVSCVSKCEHEKPMVVINPHILSVRGHNDMEEGCLSVPGVQGYVVRPAAITLKYRDEHFAERTGEFSGMVARVIQHEIDHLDGTLFVDRMEKRDRKKIQKELTALASGIVDTEYPVVEREVVPIAKPT.

Fe cation-binding residues include Cys-94 and His-136. Glu-137 is an active-site residue. His-140 contacts Fe cation.

The protein belongs to the polypeptide deformylase family. It depends on Fe(2+) as a cofactor.

The enzyme catalyses N-terminal N-formyl-L-methionyl-[peptide] + H2O = N-terminal L-methionyl-[peptide] + formate. In terms of biological role, removes the formyl group from the N-terminal Met of newly synthesized proteins. Requires at least a dipeptide for an efficient rate of reaction. N-terminal L-methionine is a prerequisite for activity but the enzyme has broad specificity at other positions. This Pelodictyon phaeoclathratiforme (strain DSM 5477 / BU-1) protein is Peptide deformylase.